The sequence spans 172 residues: MVDKRESYTKEDLLASGRGELFGAKGPQLPAPNMLMMDRVVKMTETGGNFDKGYVEAELDINPDLWFFGCHFIGDPVMPGCLGLDAMWQLVGFYLGWLGGEGKGRALGVGEVKFTGQVLPTAKKVTYRIHFKRIVNRRLIMGLADGEVLVDGRLIYTAHDLKVGLFQDTSAF.

Residue histidine 71 is part of the active site.

It belongs to the thioester dehydratase family. FabA subfamily. Homodimer.

Its subcellular location is the cytoplasm. The enzyme catalyses a (3R)-hydroxyacyl-[ACP] = a (2E)-enoyl-[ACP] + H2O. The catalysed reaction is (3R)-hydroxydecanoyl-[ACP] = (2E)-decenoyl-[ACP] + H2O. It carries out the reaction (2E)-decenoyl-[ACP] = (3Z)-decenoyl-[ACP]. The protein operates within lipid metabolism; fatty acid biosynthesis. In terms of biological role, necessary for the introduction of cis unsaturation into fatty acids. Catalyzes the dehydration of (3R)-3-hydroxydecanoyl-ACP to E-(2)-decenoyl-ACP and then its isomerization to Z-(3)-decenoyl-ACP. Can catalyze the dehydratase reaction for beta-hydroxyacyl-ACPs with saturated chain lengths up to 16:0, being most active on intermediate chain length. In Salmonella arizonae (strain ATCC BAA-731 / CDC346-86 / RSK2980), this protein is 3-hydroxydecanoyl-[acyl-carrier-protein] dehydratase.